Reading from the N-terminus, the 344-residue chain is Fructose-1,6-bisphosphatase class 1 (344 aa).

Mg(2+) is bound by residues Glu-107, Asp-129, Leu-131, and Asp-132. Substrate-binding residues include Asn-224, Tyr-252, and Lys-282. Glu-288 serves as a coordination point for Mg(2+).

This sequence belongs to the FBPase class 1 family. In terms of assembly, homotetramer. The cofactor is Mg(2+).

It is found in the cytoplasm. The catalysed reaction is beta-D-fructose 1,6-bisphosphate + H2O = beta-D-fructose 6-phosphate + phosphate. The protein operates within carbohydrate biosynthesis; Calvin cycle. The protein is Fructose-1,6-bisphosphatase class 1 of Synechococcus sp. (strain ATCC 27144 / PCC 6301 / SAUG 1402/1) (Anacystis nidulans).